We begin with the raw amino-acid sequence, 261 residues long: Global transcriptional regulator CodY (261 aa).

Positions 1-159 (MANLLDKTRK…ASTVVGLQLL (159 aa)) are GAF domain. Positions 207–226 (ASVIADRIGITRSVIVNALR) form a DNA-binding region, H-T-H motif.

Belongs to the CodY family.

The protein localises to the cytoplasm. Its function is as follows. DNA-binding global transcriptional regulator which is involved in the adaptive response to starvation and acts by directly or indirectly controlling the expression of numerous genes in response to nutrient availability. During rapid exponential growth, CodY is highly active and represses genes whose products allow adaptation to nutrient depletion. This Streptococcus thermophilus (strain CNRZ 1066) protein is Global transcriptional regulator CodY.